A 407-amino-acid polypeptide reads, in one-letter code: Carbamoyl phosphate synthase small chain (407 aa).

The segment at 1–205 (MTETTSKTAP…LADGYGEQDT (205 aa)) is CPSase. Residues Ser-60, Gly-257, and Gly-259 each contribute to the L-glutamine site. The Glutamine amidotransferase type-1 domain occupies 209-397 (HVVALDFGVK…INLIREKKGE (189 aa)). Catalysis depends on Cys-286, which acts as the Nucleophile. Residues Leu-287, Gln-290, Asn-328, Gly-330, and Phe-331 each contribute to the L-glutamine site. Catalysis depends on residues His-370 and Glu-372.

The protein belongs to the CarA family. Composed of two chains; the small (or glutamine) chain promotes the hydrolysis of glutamine to ammonia, which is used by the large (or ammonia) chain to synthesize carbamoyl phosphate. Tetramer of heterodimers (alpha,beta)4.

It catalyses the reaction hydrogencarbonate + L-glutamine + 2 ATP + H2O = carbamoyl phosphate + L-glutamate + 2 ADP + phosphate + 2 H(+). The enzyme catalyses L-glutamine + H2O = L-glutamate + NH4(+). Its pathway is amino-acid biosynthesis; L-arginine biosynthesis; carbamoyl phosphate from bicarbonate: step 1/1. The protein operates within pyrimidine metabolism; UMP biosynthesis via de novo pathway; (S)-dihydroorotate from bicarbonate: step 1/3. In terms of biological role, small subunit of the glutamine-dependent carbamoyl phosphate synthetase (CPSase). CPSase catalyzes the formation of carbamoyl phosphate from the ammonia moiety of glutamine, carbonate, and phosphate donated by ATP, constituting the first step of 2 biosynthetic pathways, one leading to arginine and/or urea and the other to pyrimidine nucleotides. The small subunit (glutamine amidotransferase) binds and cleaves glutamine to supply the large subunit with the substrate ammonia. This is Carbamoyl phosphate synthase small chain from Brucella anthropi (strain ATCC 49188 / DSM 6882 / CCUG 24695 / JCM 21032 / LMG 3331 / NBRC 15819 / NCTC 12168 / Alc 37) (Ochrobactrum anthropi).